Reading from the N-terminus, the 369-residue chain is Cytoplasmic tRNA 2-thiolation protein 1 (369 aa).

This sequence belongs to the TtcA family. CTU1/NCS6/ATPBD3 subfamily.

It is found in the cytoplasm. Its pathway is tRNA modification; 5-methoxycarbonylmethyl-2-thiouridine-tRNA biosynthesis. Its function is as follows. Plays a central role in 2-thiolation of mcm(5)S(2)U at tRNA wobble positions of tRNA(Lys), tRNA(Glu) and tRNA(Gln). Directly binds tRNAs and probably acts by catalyzing adenylation of tRNAs, an intermediate required for 2-thiolation. It is unclear whether it acts as a sulfurtransferase that transfers sulfur from thiocarboxylated URM1 onto the uridine of tRNAs at wobble position. Prior mcm(5) tRNA modification by the elongator complex is required for 2-thiolation. May also be involved in protein urmylation. The polypeptide is Cytoplasmic tRNA 2-thiolation protein 1 (Meyerozyma guilliermondii (strain ATCC 6260 / CBS 566 / DSM 6381 / JCM 1539 / NBRC 10279 / NRRL Y-324) (Yeast)).